Here is a 362-residue protein sequence, read N- to C-terminus: UPF0283 membrane protein Arad_2632 (362 aa).

Residues 1–11 (MTKPTEDDPKG) are compositionally biased toward basic and acidic residues. A disordered region spans residues 1–47 (MTKPTEDDPKGISRRPAAFSLEQEASREGAHTKTTAETPRRKPQSFD). Helical transmembrane passes span 82-102 (FSFGKVALSAFGILVSLAFGL) and 118-138 (LGYTALTVLAIGILAVLAIVV).

The protein belongs to the UPF0283 family.

It is found in the cell inner membrane. The protein is UPF0283 membrane protein Arad_2632 of Rhizobium rhizogenes (strain K84 / ATCC BAA-868) (Agrobacterium radiobacter).